Here is a 440-residue protein sequence, read N- to C-terminus: Xaa-Pro dipeptidase (440 aa).

Positions 244, 255, 335, 380, and 419 each coordinate Mn(2+).

The protein belongs to the peptidase M24B family. Bacterial-type prolidase subfamily. Mn(2+) is required as a cofactor.

The enzyme catalyses Xaa-L-Pro dipeptide + H2O = an L-alpha-amino acid + L-proline. Splits dipeptides with a prolyl residue in the C-terminal position. In Shewanella baltica (strain OS223), this protein is Xaa-Pro dipeptidase.